Consider the following 96-residue polypeptide: Fluoride-specific ion channel FluC 1 (96 aa).

2 helical membrane-spanning segments follow: residues Leu-4–Leu-24 and Leu-26–Met-46. Na(+) is bound by residues Gly-61 and Thr-64. Residues Met-69–Leu-89 traverse the membrane as a helical segment.

Belongs to the fluoride channel Fluc/FEX (TC 1.A.43) family.

Its subcellular location is the cell membrane. It carries out the reaction fluoride(in) = fluoride(out). Na(+) is not transported, but it plays an essential structural role and its presence is essential for fluoride channel function. Its function is as follows. Fluoride-specific ion channel. Important for reducing fluoride concentration in the cell, thus reducing its toxicity. The sequence is that of Fluoride-specific ion channel FluC 1 from Corynebacterium glutamicum (strain ATCC 13032 / DSM 20300 / JCM 1318 / BCRC 11384 / CCUG 27702 / LMG 3730 / NBRC 12168 / NCIMB 10025 / NRRL B-2784 / 534).